Reading from the N-terminus, the 394-residue chain is DNA replication and repair protein RecF (394 aa).

30–37 is an ATP binding site; sequence GPNAAGKT.

It belongs to the RecF family.

The protein resides in the cytoplasm. In terms of biological role, the RecF protein is involved in DNA metabolism; it is required for DNA replication and normal SOS inducibility. RecF binds preferentially to single-stranded, linear DNA. It also seems to bind ATP. The protein is DNA replication and repair protein RecF of Roseiflexus castenholzii (strain DSM 13941 / HLO8).